The primary structure comprises 355 residues: GTPase Obg (355 aa).

In terms of domain architecture, Obg spans 1–159 (MKLVDEAEIL…RLLKLELKLL (159 aa)). An OBG-type G domain is found at 160–342 (ADVGLLGFPN…IMKDVMAFFD (183 aa)). Residues 166–173 (GFPNAGKS), 191–195 (FTTLY), 213–216 (DVPG), 292–295 (NKAD), and 323–325 (SAL) each bind GTP. Serine 173 and threonine 193 together coordinate Mg(2+).

It belongs to the TRAFAC class OBG-HflX-like GTPase superfamily. OBG GTPase family. As to quaternary structure, monomer. Requires Mg(2+) as cofactor.

It is found in the cytoplasm. Functionally, an essential GTPase which binds GTP, GDP and possibly (p)ppGpp with moderate affinity, with high nucleotide exchange rates and a fairly low GTP hydrolysis rate. Plays a role in control of the cell cycle, stress response, ribosome biogenesis and in those bacteria that undergo differentiation, in morphogenesis control. In Xanthomonas euvesicatoria pv. vesicatoria (strain 85-10) (Xanthomonas campestris pv. vesicatoria), this protein is GTPase Obg.